The following is a 514-amino-acid chain: 2,3-bisphosphoglycerate-independent phosphoglycerate mutase (514 aa).

Positions 13 and 63 each coordinate Mn(2+). The Phosphoserine intermediate role is filled by S63. Substrate is bound by residues H124, 154-155 (RD), R186, R192, 258-261 (RADR), and K332. D399, H403, D440, H441, and H459 together coordinate Mn(2+).

It belongs to the BPG-independent phosphoglycerate mutase family. Monomer. The cofactor is Mn(2+).

It carries out the reaction (2R)-2-phosphoglycerate = (2R)-3-phosphoglycerate. It functions in the pathway carbohydrate degradation; glycolysis; pyruvate from D-glyceraldehyde 3-phosphate: step 3/5. Catalyzes the interconversion of 2-phosphoglycerate and 3-phosphoglycerate. This is 2,3-bisphosphoglycerate-independent phosphoglycerate mutase from Legionella pneumophila (strain Lens).